A 213-amino-acid polypeptide reads, in one-letter code: Ephrin-A2 (213 aa).

An N-terminal signal peptide occupies residues 1 to 24 (MAPAQRPLLPLLLLLLPLPPPPFA). An Ephrin RBD domain is found at 34-174 (SDRYAVYWNR…RLKVYVRPTN (141 aa)). Asn-42 carries N-linked (GlcNAc...) asparagine glycosylation. Cystine bridges form between Cys-73-Cys-114 and Cys-102-Cys-163. Asn-174 and Asn-188 each carry an N-linked (GlcNAc...) asparagine glycan. Asn-188 carries GPI-anchor amidated asparagine lipidation. Residues 189–213 (NSCSSPGGCRLFLSTIPVLWTLLGS) constitute a propeptide, removed in mature form.

It belongs to the ephrin family. Binds to the receptor tyrosine kinases EPHA3, EPHA4 and EPHA5. Interacts with EPHA8; activates EPHA8.

The protein resides in the cell membrane. Its function is as follows. Cell surface GPI-bound ligand for Eph receptors, a family of receptor tyrosine kinases which are crucial for migration, repulsion and adhesion during neuronal, vascular and epithelial development. Binds promiscuously Eph receptors residing on adjacent cells, leading to contact-dependent bidirectional signaling into neighboring cells. The signaling pathway downstream of the receptor is referred to as forward signaling while the signaling pathway downstream of the ephrin ligand is referred to as reverse signaling. With the EPHA2 receptor may play a role in bone remodeling through regulation of osteoclastogenesis and osteoblastogenesis. In Homo sapiens (Human), this protein is Ephrin-A2 (EFNA2).